The following is a 361-amino-acid chain: G-protein coupled receptor 183 (361 aa).

The Extracellular portion of the chain corresponds to Met-1 to Arg-31. The chain crosses the membrane as a helical span at residues Ile-32–Val-57. Residues Gln-58–Asp-77 lie on the Cytoplasmic side of the membrane. The helical transmembrane segment at Ile-78–Phe-95 threads the bilayer. Arg-87 serves as a coordination point for 7alpha,25-dihydroxycholesterol. The Extracellular portion of the chain corresponds to Asp-96–Arg-105. Cys-104 and Cys-181 form a disulfide bridge. Residues Ile-106–Ile-127 traverse the membrane as a helical segment. 7alpha,25-dihydroxycholesterol-binding residues include Tyr-112 and Tyr-116. An interaction with G proteins region spans residues Ser-126–Val-134. Residues Asp-128 to Lys-149 lie on the Cytoplasmic side of the membrane. A helical transmembrane segment spans residues Gly-150–Ile-168. The Extracellular segment spans residues Asn-169–Ser-192. Residues Leu-193–Cys-215 form a helical membrane-spanning segment. The Cytoplasmic portion of the chain corresponds to Tyr-216–Lys-241. Residues Ala-242 to Ile-265 form a helical membrane-spanning segment. Tyr-260 is a 7alpha,25-dihydroxycholesterol binding site. The Extracellular portion of the chain corresponds to Gln-266–Gln-287. The chain crosses the membrane as a helical span at residues Ile-288–Cys-312. Residues Lys-313–Lys-361 lie on the Cytoplasmic side of the membrane. Position 328 is a phosphoserine (Ser-328). Residues Glu-340–Lys-361 form a disordered region. The span at Glu-348–Lys-361 shows a compositional bias: polar residues.

The protein belongs to the G-protein coupled receptor 1 family. In terms of assembly, homodimer and heterodimer. Heterodimerizes with CXCR5; leading to modulate the interaction between of CXCL13 and CXCR5. As to expression, expressed abundantly in lymphoid tissues such as spleen and lymph node, and in B- and T-lymphocytes. Also highly expressed in lung, heart and gastrointestinal tract, and weakly expressed in the urogenital system and brain. Expressed in astrocytes.

It localises to the cell membrane. Its function is as follows. G-protein coupled receptor expressed in lymphocytes that acts as a chemotactic receptor for B-cells, T-cells, splenic dendritic cells, monocytes/macrophages and astrocytes. Receptor for oxysterol 7-alpha,25-dihydroxycholesterol (7-alpha,25-OHC) and other related oxysterols. Mediates cell positioning and movement of a number of cells by binding the 7-alpha,25-OHC ligand that forms a chemotactic gradient. Binding of 7-alpha,25-OHC mediates the correct localization of B-cells during humoral immune responses. Guides B-cell movement along the B-cell zone-T-cell zone boundary and later to interfollicular and outer follicular regions. Its specific expression during B-cell maturation helps position B-cells appropriately for mounting T-dependent antibody responses. Collaborates with CXCR5 to mediate B-cell migration; probably by forming a heterodimer with CXCR5 that affects the interaction between of CXCL13 and CXCR5. Also acts as a chemotactic receptor for some T-cells upon binding to 7-alpha,25-OHC ligand. Promotes follicular helper T (Tfh) cells differentiation by positioning activated T-cells at the follicle-T-zone interface, promoting contact of newly activated CD4 T-cells with activated dendritic cells and exposing them to Tfh-cell-promoting inducible costimulator (ICOS) ligand. Expression in splenic dendritic cells is required for their homeostasis, localization and ability to induce B- and T-cell responses: GPR183 acts as a chemotactic receptor in dendritic cells that mediates the accumulation of CD4(+) dendritic cells in bridging channels. Regulates migration of astrocytes and is involved in communication between astrocytes and macrophages. Promotes osteoclast precursor migration to bone surfaces. Signals constitutively through G(i)-alpha, but not G(s)-alpha or G(q)-alpha. Signals constitutively also via MAPK1/3 (ERK1/2). This is G-protein coupled receptor 183 from Homo sapiens (Human).